A 234-amino-acid polypeptide reads, in one-letter code: Adenosine 5'-phosphosulfate reductase (234 aa).

Cysteine 120, cysteine 121, cysteine 203, and cysteine 206 together coordinate [4Fe-4S] cluster. Catalysis depends on cysteine 229, which acts as the Nucleophile; cysteine thiosulfonate intermediate.

It belongs to the PAPS reductase family. CysH subfamily. [4Fe-4S] cluster is required as a cofactor.

It localises to the cytoplasm. It carries out the reaction [thioredoxin]-disulfide + sulfite + AMP + 2 H(+) = adenosine 5'-phosphosulfate + [thioredoxin]-dithiol. It participates in sulfur metabolism; hydrogen sulfide biosynthesis; sulfite from sulfate. Functionally, catalyzes the formation of sulfite from adenosine 5'-phosphosulfate (APS) using thioredoxin as an electron donor. The sequence is that of Adenosine 5'-phosphosulfate reductase from Bacillus cereus (strain ATCC 14579 / DSM 31 / CCUG 7414 / JCM 2152 / NBRC 15305 / NCIMB 9373 / NCTC 2599 / NRRL B-3711).